The sequence spans 206 residues: Cytochrome b6-f complex iron-sulfur subunit, chloroplastic (206 aa).

Residues 1 to 29 (MAMLSSRRVAAPAKASAIRRSRVMPVVRA) constitute a chloroplast transit peptide. The helical transmembrane segment at 39–68 (MNKRNIMNLILAGGAGLPITTLALGYGAFF) threads the bilayer. In terms of domain architecture, Rieske spans 92–188 (AGEWLKTHLA…CDVAESGLVT (97 aa)). [2Fe-2S] cluster contacts are provided by Cys-134, His-136, Cys-152, and His-155. Cys-139 and Cys-154 are joined by a disulfide.

Belongs to the Rieske iron-sulfur protein family. In terms of assembly, the 4 large subunits of the cytochrome b6-f complex are cytochrome b6, subunit IV (17 kDa polypeptide, petD), cytochrome f and the Rieske protein, while the 4 small subunits are petG, petL, petM and petN. The complex functions as a dimer. The cofactor is [2Fe-2S] cluster.

It is found in the plastid. Its subcellular location is the chloroplast thylakoid membrane. The catalysed reaction is 2 oxidized [plastocyanin] + a plastoquinol + 2 H(+)(in) = 2 reduced [plastocyanin] + a plastoquinone + 4 H(+)(out). In terms of biological role, component of the cytochrome b6-f complex, which mediates electron transfer between photosystem II (PSII) and photosystem I (PSI), cyclic electron flow around PSI, and state transitions. The protein is Cytochrome b6-f complex iron-sulfur subunit, chloroplastic (petC) of Chlamydomonas reinhardtii (Chlamydomonas smithii).